The chain runs to 216 residues: Potassium-transporting ATPase KdpC subunit (216 aa).

The chain crosses the membrane as a helical span at residues 12 to 32 (LLGVSLLVFGLLYQGSLMAIG). Positions 197 to 207 (QNETDQNSDMN) are enriched in polar residues. A disordered region spans residues 197–216 (QNETDQNSDMNASEIANGDH).

It belongs to the KdpC family. As to quaternary structure, the system is composed of three essential subunits: KdpA, KdpB and KdpC. The complex also contains KdpF, a small non-essential subunit.

It is found in the cell membrane. In terms of biological role, part of the high-affinity ATP-driven potassium transport (or Kdp) system, which catalyzes the hydrolysis of ATP coupled with the electrogenic transport of potassium into the cytoplasm. This subunit acts as a catalytic chaperone that increases the ATP-binding affinity of the ATP-hydrolyzing subunit KdpB by the formation of a transient KdpB/KdpC/ATP ternary complex. The Kdp system is essential for growth under K(+) limitation, and for survival under desiccation and salt crystal inclusion. The sequence is that of Potassium-transporting ATPase KdpC subunit from Halobacterium salinarum (strain ATCC 29341 / DSM 671 / R1).